The sequence spans 202 residues: Large ribosomal subunit protein bL25 (202 aa).

Positions 1-21 are disordered; the sequence is MSKESYELKAEARERVGKGSS.

This sequence belongs to the bacterial ribosomal protein bL25 family. CTC subfamily. In terms of assembly, part of the 50S ribosomal subunit; part of the 5S rRNA/L5/L18/L25 subcomplex. Contacts the 5S rRNA. Binds to the 5S rRNA independently of L5 and L18.

This is one of the proteins that binds to the 5S RNA in the ribosome where it forms part of the central protuberance. This chain is Large ribosomal subunit protein bL25, found in Agrobacterium fabrum (strain C58 / ATCC 33970) (Agrobacterium tumefaciens (strain C58)).